Consider the following 242-residue polypeptide: Uridylate kinase (242 aa).

Position 8–11 (8–11 (KFSG)) interacts with ATP. Glycine 50 contacts UMP. Residues glycine 51 and arginine 55 each contribute to the ATP site. UMP contacts are provided by residues aspartate 71 and 132–139 (TGNPFFTT). ATP is bound by residues threonine 159, tyrosine 165, and aspartate 168.

The protein belongs to the UMP kinase family. Homohexamer.

It localises to the cytoplasm. It carries out the reaction UMP + ATP = UDP + ADP. Its pathway is pyrimidine metabolism; CTP biosynthesis via de novo pathway; UDP from UMP (UMPK route): step 1/1. Its activity is regulated as follows. Inhibited by UTP. Functionally, catalyzes the reversible phosphorylation of UMP to UDP. This is Uridylate kinase from Nitratiruptor sp. (strain SB155-2).